The primary structure comprises 318 residues: tRNA dimethylallyltransferase (318 aa).

Position 13–20 (13–20 (GPTAVGKT)) interacts with ATP. Residue 15-20 (TAVGKT) participates in substrate binding. An interaction with substrate tRNA region spans residues 38–41 (DSMQ).

It belongs to the IPP transferase family. In terms of assembly, monomer. The cofactor is Mg(2+).

The catalysed reaction is adenosine(37) in tRNA + dimethylallyl diphosphate = N(6)-dimethylallyladenosine(37) in tRNA + diphosphate. Catalyzes the transfer of a dimethylallyl group onto the adenine at position 37 in tRNAs that read codons beginning with uridine, leading to the formation of N6-(dimethylallyl)adenosine (i(6)A). The polypeptide is tRNA dimethylallyltransferase (Bacillus pumilus (strain SAFR-032)).